The primary structure comprises 310 residues: Oxygen-dependent coproporphyrinogen-III oxidase (310 aa).

Position 97 (Ser97) interacts with substrate. His101 and His111 together coordinate a divalent metal cation. The active-site Proton donor is His111. 113–115 (NFR) is a substrate binding site. A divalent metal cation is bound by residues His150 and His180. The segment at 245–280 (YVEFNLLYDRGTRFGLEFGGRTESILMSLPPRVVWR) is important for dimerization. 263 to 265 (GGR) is a substrate binding site.

This sequence belongs to the aerobic coproporphyrinogen-III oxidase family. As to quaternary structure, homodimer. The cofactor is a divalent metal cation.

It localises to the cytoplasm. It carries out the reaction coproporphyrinogen III + O2 + 2 H(+) = protoporphyrinogen IX + 2 CO2 + 2 H2O. The protein operates within porphyrin-containing compound metabolism; protoporphyrin-IX biosynthesis; protoporphyrinogen-IX from coproporphyrinogen-III (O2 route): step 1/1. In terms of biological role, involved in the heme biosynthesis. Catalyzes the aerobic oxidative decarboxylation of propionate groups of rings A and B of coproporphyrinogen-III to yield the vinyl groups in protoporphyrinogen-IX. This chain is Oxygen-dependent coproporphyrinogen-III oxidase, found in Coxiella burnetii (strain RSA 331 / Henzerling II).